The following is a 228-amino-acid chain: NAD(P)H-hydrate epimerase (228 aa).

The YjeF N-terminal domain maps to Val-9 to Ala-209. Asn-53 to Asp-57 contributes to the (6S)-NADPHX binding site. Residues Asn-54 and Asp-115 each contribute to the K(+) site. Residues Gly-119 to Pro-125 and Asp-148 each bind (6S)-NADPHX. Position 151 (Ser-151) interacts with K(+).

This sequence belongs to the NnrE/AIBP family. Requires K(+) as cofactor.

It carries out the reaction (6R)-NADHX = (6S)-NADHX. It catalyses the reaction (6R)-NADPHX = (6S)-NADPHX. Functionally, catalyzes the epimerization of the S- and R-forms of NAD(P)HX, a damaged form of NAD(P)H that is a result of enzymatic or heat-dependent hydration. This is a prerequisite for the S-specific NAD(P)H-hydrate dehydratase to allow the repair of both epimers of NAD(P)HX. The protein is NAD(P)H-hydrate epimerase of Bordetella parapertussis (strain 12822 / ATCC BAA-587 / NCTC 13253).